Consider the following 311-residue polypeptide: Olfactory receptor 8G1 (311 aa).

Residues 1–25 (MSGENNSSVTEFILAGLSEQPELQL) lie on the Extracellular side of the membrane. N-linked (GlcNAc...) asparagine glycosylation is found at N5 and N6. A helical membrane pass occupies residues 26 to 46 (PLFLLFLGIYVVTVVGNLGMT). Residues 47–54 (TLIWLSSH) lie on the Cytoplasmic side of the membrane. The chain crosses the membrane as a helical span at residues 55–75 (LHTPMYYFLSSLSFIDFCHST). Residues 76–99 (VITPKMLVNFVTEKNIISYPECMT) are Extracellular-facing. A disulfide bridge links C97 with C189. Residues 100–120 (QLYFFLVFAIAECHMLAAMAY) traverse the membrane as a helical segment. Topologically, residues 121–139 (DRYMAICSPLLYSVIISNK) are cytoplasmic. Residues 140–160 (ACFSLILGVYIIGLVCASVHT) form a helical membrane-spanning segment. The Extracellular segment spans residues 161–197 (GCMFRVQFCKFDLINHYFCDLLPLLKLSCSSIYVNKL). The helical transmembrane segment at 198 to 217 (LILCVGAFNILVPSLTILCS) threads the bilayer. At 218-237 (YIFIIASILHIRSTEGRSKA) the chain is on the cytoplasmic side. A helical membrane pass occupies residues 238-258 (FSTCSSHMLAVVIFFGSAAFM). Over 259-271 (YLQPSSISSMDQG) the chain is Extracellular. Residues 272-292 (KVSSVFYTIIVPMLNPLIYSL) form a helical membrane-spanning segment. At 293–311 (RNKDVHVSLKKMLQRRTLL) the chain is on the cytoplasmic side.

It belongs to the G-protein coupled receptor 1 family.

The protein resides in the cell membrane. Odorant receptor. In Homo sapiens (Human), this protein is Olfactory receptor 8G1 (OR8G1).